We begin with the raw amino-acid sequence, 211 residues long: Bcl-2-related ovarian killer protein homolog B (211 aa).

The short motif at K32–T44 is the BH4 element. The short motif at V67 to P83 is the BH3 element. A BH1 motif is present at residues E113 to A132. Residues W165–V179 carry the BH2 motif. A helical transmembrane segment spans residues W190 to T210.

Belongs to the Bcl-2 family. Expressed strongly in ovary and more weakly in eye. Little expression in other tissues examined.

The protein localises to the membrane. Functionally, may play a role in apoptosis. Does not appear to show pro-apoptotic activity when expressed ectopically in early embryos. The sequence is that of Bcl-2-related ovarian killer protein homolog B (bokb) from Danio rerio (Zebrafish).